Reading from the N-terminus, the 413-residue chain is N-acylneuraminate cytidylyltransferase (413 aa).

This sequence belongs to the CMP-NeuNAc synthase family. Mg(2+) is required as a cofactor. It depends on Mn(2+) as a cofactor.

It localises to the cytoplasm. The catalysed reaction is an N-acylneuraminate + CTP = a CMP-N-acyl-beta-neuraminate + diphosphate. Catalyzes the formation of CMP-N-acetylneuraminic acid (CMP-NeuNAc), which is essential for the formation of the capsule. The protein is N-acylneuraminate cytidylyltransferase (neuA) of Streptococcus agalactiae serotype V (strain ATCC BAA-611 / 2603 V/R).